The following is a 345-amino-acid chain: AP2-like ethylene-responsive transcription factor At1g16060 (345 aa).

A disordered region spans residues 15–62 (TRQSKKTSVENETGDDQSATSVVLKAKRKRRSQPRDAPPQRSSVHRGV). DNA-binding regions (AP2/ERF) lie at residues 58 to 124 (VHRG…LNFP) and 160 to 218 (KYRG…TNFD). Residues 243 to 302 (HSDLSPFIKPNHESDLSQSQSSSEDNDDRKTKLLKSSPLVAEEVIGPSTPPEIAPPRRSF) are disordered.

It belongs to the AP2/ERF transcription factor family. AP2 subfamily.

Its subcellular location is the nucleus. Functionally, probably acts as a transcriptional activator. Binds to the GCC-box pathogenesis-related promoter element. May be involved in the regulation of gene expression by stress factors and by components of stress signal transduction pathways. This is AP2-like ethylene-responsive transcription factor At1g16060 from Arabidopsis thaliana (Mouse-ear cress).